Consider the following 182-residue polypeptide: Peptidyl-prolyl cis-trans isomerase ssp-1 (182 aa).

One can recognise a WW domain in the interval 7-41; it reads TGLPEDWEVRHSQSKNLPYYFNSATKTSRWEPPSG. Positions 71 to 182 constitute a PpiC domain; the sequence is QGKIRCAHLL…SGLHLIERLE (112 aa).

It carries out the reaction [protein]-peptidylproline (omega=180) = [protein]-peptidylproline (omega=0). Its function is as follows. Site-specific PPIase with respect to the amino acid N-terminal to the proline residue. Peptides with glutamate, phosphoserine, or phosphothreonine in the -1 position are the best substrates. It is not only able to isomerize small peptides but is also active in protein folding. The sequence is that of Peptidyl-prolyl cis-trans isomerase ssp-1 (ssp-1) from Neurospora crassa (strain ATCC 24698 / 74-OR23-1A / CBS 708.71 / DSM 1257 / FGSC 987).